Reading from the N-terminus, the 444-residue chain is Coagulation factor VII (444 aa).

The N-terminal stretch at 1 to 21 (MAPQARGLGLCSLLALQASLA) is a signal peptide. A propeptide spanning residues 22-39 (AVFITQEEAHSVLRRQRR) is cleaved from the precursor. The 45-residue stretch at 40–84 (ANSFLEELRPGSLERECKEELCSFEEAREVFQSTERTKQFWITYN) folds into the Gla domain. Glu-45, Glu-46, Glu-53, Glu-55, Glu-58, Glu-59, Glu-64, Glu-65, Glu-68, and Glu-74 each carry 4-carboxyglutamate. A disulfide bridge links Cys-56 with Cys-61. The EGF-like 1; calcium-binding domain occupies 85–121 (DGDQCASNPCQNGGSCEDQIQSYICFCLADFEGRNCE). 9 cysteine pairs are disulfide-bonded: Cys-89–Cys-100, Cys-94–Cys-109, Cys-111–Cys-120, Cys-130–Cys-141, Cys-137–Cys-151, Cys-153–Cys-166, Cys-174–Cys-301, Cys-198–Cys-203, and Cys-217–Cys-233. Ser-91 carries O-linked (Glc...) serine; alternate glycosylation. A glycan (O-linked (Xyl...) serine; alternate) is linked at Ser-91. The O-linked (Fuc) serine glycan is linked to Ser-99. Asp-102 carries the post-translational modification (3R)-3-hydroxyaspartate. One can recognise an EGF-like 2 domain in the interval 126-167 (DQLICMYENGGCEQYCSDHVGSQRSCRCHEGYTLLPNGVSCT). One can recognise a Peptidase S1 domain in the interval 192 to 431 (IVGGKVCPKG…YTEWLSRLMR (240 aa)). Asn-211 is a glycosylation site (N-linked (GlcNAc...) asparagine). The active-site Charge relay system is the His-232. The N-linked (GlcNAc...) asparagine glycan is linked to Asn-242. Asp-281 acts as the Charge relay system in catalysis. A glycan (N-linked (GlcNAc...) asparagine) is linked at Asn-306. Residues Cys-349 and Cys-368 are joined by a disulfide bond. Asp-377 contributes to the substrate binding site. Cys-379 and Cys-407 are joined by a disulfide. Ser-383 functions as the Charge relay system in the catalytic mechanism.

This sequence belongs to the peptidase S1 family. In terms of assembly, heterodimer of a light chain and a heavy chain linked by a disulfide bond. Post-translationally, the vitamin K-dependent, enzymatic carboxylation of some glutamate residues allows the modified protein to bind calcium. In terms of processing, the iron and 2-oxoglutarate dependent 3-hydroxylation of aspartate and asparagine is (R) stereospecific within EGF domains. O-glycosylated. O-fucosylated by POFUT1 on a conserved serine or threonine residue found in the consensus sequence C2-X(4,5)-[S/T]-C3 of EGF domains, where C2 and C3 are the second and third conserved cysteines. Post-translationally, can be either O-glucosylated or O-xylosylated at Ser-91 by POGLUT1. As to expression, plasma.

The protein localises to the secreted. It catalyses the reaction Selective cleavage of Arg-|-Ile bond in factor X to form factor Xa.. In terms of biological role, initiates the extrinsic pathway of blood coagulation. Serine protease that circulates in the blood in a zymogen form. Factor VII is converted to factor VIIa by factor Xa, factor XIIa, factor IXa, or thrombin by minor proteolysis. In the presence of tissue factor and calcium ions, factor VIIa then converts factor X to factor Xa by limited proteolysis. Factor VIIa also converts factor IX to factor IXa in the presence of tissue factor and calcium. This is Coagulation factor VII (F7) from Oryctolagus cuniculus (Rabbit).